The primary structure comprises 1620 residues: Putative zinc carboxypeptidase (1620 aa).

Topologically, residues 1 to 1367 (MLFKNEDSGN…SYDFLYFDEN (1367 aa)) are extracellular. Asn19 carries an N-linked (GlcNAc...) asparagine glycan. The segment at 32–74 (RNDNKNNDNEDNKQDDEEKNDEDDNKSNLLLEENEENKRQGDK) is disordered. Over residues 33–43 (NDNKNNDNEDN) the composition is skewed to basic and acidic residues. The span at 44–55 (KQDDEEKNDEDD) shows a compositional bias: acidic residues. N-linked (GlcNAc...) asparagine glycosylation is found at Asn56 and Asn102. Residues 309-328 (GNHYDAHESTNTYDEEKTRE) are disordered. Residues Asn354, Asn487, Asn508, Asn529, Asn550, Asn571, Asn589, Asn687, Asn802, and Asn1010 are each glycosylated (N-linked (GlcNAc...) asparagine). The interval 497 to 559 (VNNLDSTVNY…NSTGNNINNI (63 aa)) is possible malaria epitope. The region spanning 1004–1261 (GENKKNNGTK…FYVQNYFEGY (258 aa)) is the Peptidase M14 domain. Zn(2+) is bound by residues His1059 and Glu1062. N-linked (GlcNAc...) asparagine glycans are attached at residues Asn1064 and Asn1141. His1155 is a binding site for Zn(2+). The active-site Proton donor/acceptor is the Glu1229. Residues 1279–1329 (NIKGDDNINGDDNIKGGDNIKGDDNIKRDDNFQRDDNFQRDDNFQRGDNFH) are disordered. The chain crosses the membrane as a helical span at residues 1368–1388 (LLFMTGVSFGICLFKFINFLS). Residues 1389-1620 (YHKSSICRRT…SKRKKVIVIL (232 aa)) lie on the Cytoplasmic side of the membrane. A disordered region spans residues 1560-1620 (PNGKYKGPGF…SKRKKVIVIL (61 aa)). Basic and acidic residues predominate over residues 1581-1597 (NKNESKTEKKSKTENKS). Residues 1598 to 1620 (KSKSKNKSKSKNKSKRKKVIVIL) are compositionally biased toward basic residues.

Belongs to the peptidase M14 family. The cofactor is Zn(2+).

It localises to the membrane. The protein is Putative zinc carboxypeptidase of Plasmodium falciparum (isolate 3D7).